A 345-amino-acid chain; its full sequence is MASMTGGQQMGTNQGKGVVAAGDKLALFLKVFGGEVLTAFARTSVTTSRHMVRSISSGKSAQFPVLGRTQAAYLAPGENLDDKRKDIKHTEKVITIDGLLTADVLIYDIEDAMNHYDVRSEYTSQLGESLAMAADGAVLAEIAGLCNVESKYNENIEGLGTATVIETTQNKAALTDQVALGKEIIAALTKARAALTKNYVPAADRVFYCDPDSYSAILAALMPNAANYAALIDPEKGSIRNVMGFEVVEVPHLTAGGAGTAREGTTGQKHVFPANKGEGNVKVAKDNVIGLFMHRSAVGTVKLRDLALERARRANFQADQIIAKYAMGHGGLRPEAAGAVVFKVE.

Intercapsomeric interactions stretches follow at residues 11 to 25 and 152 to 156; these read GTNQGKGVVAAGDKL and YNENI.

Belongs to the T7virus major capsid protein family. In terms of assembly, homohexamer. Interacts with the connector protein and the minor capsid protein. Interacts with the capsid assembly scaffolding protein; capsid proteins and scaffolding proteins form building blocks that assemble to form the procapsid, each hexamer of the major capsid protein interacting with 2 scaffolding proteins.

Its subcellular location is the virion. Assembles with the minor capsid protein to form an icosahedral capsid with a T=7 symmetry, about 60 nm in diameter, and consisting of 415 capsid proteins. The major and minor capsid proteins are incorporated into the capsid in about a 90/10 ratio respectively. Once the capsid is formed, encapsidates one single copy of the viral genome. The polypeptide is Major capsid protein (Escherichia coli (Bacteriophage T7)).